Reading from the N-terminus, the 779-residue chain is Cysteine-rich protein 2-binding protein (779 aa).

A disordered region spans residues M1–G34. Position 4 is a phosphoserine (S4). K230 is modified (N6-acetyllysine). Disordered stretches follow at residues S247–F292, L314–T345, and P360–Y457. Positions M255–K275 are enriched in basic and acidic residues. S284 carries the phosphoserine modification. At K291 the chain carries N6-acetyllysine. The segment covering L314–S334 has biased composition (low complexity). Basic and acidic residues-rich tracts occupy residues R402–G423 and K443–P452. S413 is modified (phosphoserine). Positions L635–R779 constitute an N-acetyltransferase domain.

Interacts with the LIM 1 domain of CSRP2. Component of the ADA2A-containing complex (ATAC), composed of CSRP2BP, KAT2A, TADA2L, TADA3L, ZZ3, MBIP, WDR5, YEATS2, CCDC101 and DR1. In the complex, it probably interacts directly with KAT2A, MBIP and WDR5.

The protein localises to the nucleus. The protein resides in the cytoplasm. In terms of biological role, component of the ATAC complex, a complex with histone acetyltransferase activity on histones H3 and H4. May function as a scaffold for the ATAC complex to promote ATAC complex stability. Has also weak histone acetyltransferase activity toward histone H4. Required for the normal progression through G1 and G2/M phases of the cell cycle. This Mus musculus (Mouse) protein is Cysteine-rich protein 2-binding protein.